A 213-amino-acid polypeptide reads, in one-letter code: uncharacterized protein (213 aa).

This is an uncharacterized protein from Escherichia coli (strain UTI89 / UPEC).